A 235-amino-acid polypeptide reads, in one-letter code: Sugar fermentation stimulation protein homolog (235 aa).

It belongs to the SfsA family.

This chain is Sugar fermentation stimulation protein homolog, found in Nitrosococcus oceani (strain ATCC 19707 / BCRC 17464 / JCM 30415 / NCIMB 11848 / C-107).